The chain runs to 443 residues: ATP-dependent protease ATPase subunit HslU (443 aa).

ATP is bound by residues Val-18 and 60-65 (GVGKTE). The tract at residues 136-158 (LPPPRDFNEDSQRTNADSSTRQL) is disordered. Residues 148–157 (RTNADSSTRQ) show a composition bias toward polar residues. Residues Asp-256, Glu-321, and Arg-393 each coordinate ATP.

Belongs to the ClpX chaperone family. HslU subfamily. In terms of assembly, a double ring-shaped homohexamer of HslV is capped on each side by a ring-shaped HslU homohexamer. The assembly of the HslU/HslV complex is dependent on binding of ATP.

The protein resides in the cytoplasm. ATPase subunit of a proteasome-like degradation complex; this subunit has chaperone activity. The binding of ATP and its subsequent hydrolysis by HslU are essential for unfolding of protein substrates subsequently hydrolyzed by HslV. HslU recognizes the N-terminal part of its protein substrates and unfolds these before they are guided to HslV for hydrolysis. The chain is ATP-dependent protease ATPase subunit HslU from Marinobacter nauticus (strain ATCC 700491 / DSM 11845 / VT8) (Marinobacter aquaeolei).